A 174-amino-acid chain; its full sequence is ATP-dependent protease subunit HslV (174 aa).

The active site involves T2. Na(+) is bound by residues G157, C160, and T163.

Belongs to the peptidase T1B family. HslV subfamily. As to quaternary structure, a double ring-shaped homohexamer of HslV is capped on each side by a ring-shaped HslU homohexamer. The assembly of the HslU/HslV complex is dependent on binding of ATP.

The protein resides in the cytoplasm. It carries out the reaction ATP-dependent cleavage of peptide bonds with broad specificity.. Allosterically activated by HslU binding. Functionally, protease subunit of a proteasome-like degradation complex believed to be a general protein degrading machinery. The chain is ATP-dependent protease subunit HslV from Yersinia enterocolitica serotype O:8 / biotype 1B (strain NCTC 13174 / 8081).